A 1173-amino-acid polypeptide reads, in one-letter code: SMC5-SMC6 complex localization factor protein 2 (1173 aa).

The disordered stretch occupies residues 1–109 (MTRRCMPARP…KPKRVPPEKS (109 aa)). Basic and acidic residues-rich tracts occupy residues 39 to 50 (KRTESPGDRKQS) and 88 to 106 (QFER…RVPP). Positions 137–149 (SLASKYLAKGTNI) match the APIM motif motif. Disordered stretches follow at residues 161–230 (MKSL…PEES), 256–275 (QMEQ…SLSL), 280–373 (ERKY…QKEK), 394–620 (KEPS…EEET), and 635–663 (TPAA…VHPG). Positions 181 to 199 (ENNEKNDRDRGKTNADSKK) are enriched in basic and acidic residues. Low complexity-rich tracts occupy residues 212–221 (SSRSLSSRSS) and 262–275 (NSEN…SLSL). Residues 280–293 (ERKYKPRQEQRKQN) show a composition bias toward basic and acidic residues. The span at 317–330 (SDSWEPTSAGSKQN) shows a compositional bias: polar residues. Composition is skewed to basic and acidic residues over residues 339-349 (NSVDSDLKSTR) and 355-373 (KARE…QKEK). Positions 409-428 (PSNSGNSGHHSTRNSDQIQV) are enriched in polar residues. Ser481 is subject to Phosphoserine. Residues 499 to 520 (SKKDKERSSSKECSGHSTESTK) are compositionally biased toward basic and acidic residues. Low complexity predominate over residues 571 to 592 (APSDKAPSEGESSGNSNAGSSA). Residues 602–619 (DSDEESLGYNLDSDEEEE) show a composition bias toward acidic residues. A phosphoserine mark is found at Ser603, Ser607, and Ser614. The interval 635-1173 (TPAATGKPPA…QLHDFWVPDS (539 aa)) is interaction with SIMC1. The tract at residues 664 to 1166 (TYTNTLERLV…NCRPTQGQLH (503 aa)) is NSE6-like domain. A required for interaction with SLF1 and RAD18 region spans residues 702–1173 (PIRIGEEDST…QLHDFWVPDS (472 aa)).

This sequence belongs to the FAM178 family. In terms of assembly, forms a heterodimer with SIMC1. Interacts with SLF1 (via N-terminus); this interaction links RAD18 to the SMC5-SMC6 complex. Interacts with RAD18; this interaction is increased in a SLF1-dependent manner. Interacts with SMC5 and SMC6. As to expression, widely expressed. Expressed at higher level in skeletal muscle and at slightly lower level in brain, liver and heart, than in lung, kidney, spleen and thymus.

The protein resides in the nucleus. Its subcellular location is the PML body. In terms of biological role, plays a role in the DNA damage response (DDR) pathway by regulating postreplication repair of UV-damaged DNA and genomic stability maintenance. The SLF1-SLF2 complex acts to link RAD18 with the SMC5-SMC6 complex at replication-coupled interstrand cross-links (ICL) and DNA double-strand breaks (DSBs) sites on chromatin during DNA repair in response to stalled replication forks. Promotes the recruitment of the SMC5-SMC6 complex to DNA lesions. Plays a role in SMC5-SMC6 complex recruitment for viral restriction. Forms a complex with SIMC1 and this complex is required to recruit SMC5-SMC6 complex to PML nuclear bodies and sites of viral replication. The sequence is that of SMC5-SMC6 complex localization factor protein 2 from Homo sapiens (Human).